A 229-amino-acid chain; its full sequence is uncharacterized protein (229 aa).

To T.pallidum TP_0315, TP_0618 and TP_0619.

This is an uncharacterized protein from Treponema pallidum (strain Nichols).